Reading from the N-terminus, the 210-residue chain is Transcriptional regulator GfcR (210 aa).

The interval 39–60 (VERSGAATEPEPRAEPEGPDDI) is disordered. The span at 48–60 (PEPRAEPEGPDDI) shows a compositional bias: basic and acidic residues.

Belongs to the purine/pyrimidine phosphoribosyltransferase family. GfcR subfamily.

With respect to regulation, interaction with effectors modulates GfcR activity. 2-keto-3-deoxy-6-phosphogluconate (KDPG), fructose-1,6-bisphosphate (FBP), 2-keto-3-deoxy-6-phosphogalactonate (KDPGal) and glycerol-3-phosphate (G3P), which are intermediates of sugar and glycerol degradation pathways, can act as inducer molecules. Functionally, DNA-binding transcriptional regulator that functions as a regulator of central sugar catabolic pathways. Is both a local regulator of specific steps in the pathways for D-glucose and D-fructose degradation and a global regulator of hexose catabolism. In the presence of D-glucose, activates expression of the gene encoding the gluconate dehydratase (gad), which is involved in D-glucose catabolism via the semiphosphorylative Entner-Doudoroff (spED) pathway. In the presence of D-fructose, activates expression of the genes encoding the PTS system EIIC component (ptfC) and the fructose-1,6-bisphosphate aldolase (fba), which are involved in D-fructose uptake and degradation via the modified Embden-Meyerhof pathway. In addition, in the presence of D-glucose, D-fructose, D-galactose or glycerol, it activates expression of the genes encoding glyceraldehyde-3-phosphate dehydrogenase (gap) and pyruvate kinase (pykA), enzymes common to all four degradation pathways. Acts by binding directly to the promoter region of the regulated genes. This is Transcriptional regulator GfcR from Haloferax volcanii (strain ATCC 29605 / DSM 3757 / JCM 8879 / NBRC 14742 / NCIMB 2012 / VKM B-1768 / DS2) (Halobacterium volcanii).